The sequence spans 188 residues: V-type proton ATPase subunit E (188 aa).

It belongs to the V-ATPase E subunit family.

Its function is as follows. Produces ATP from ADP in the presence of a proton gradient across the membrane. This chain is V-type proton ATPase subunit E, found in Dictyoglomus thermophilum (strain ATCC 35947 / DSM 3960 / H-6-12).